The chain runs to 331 residues: Minor capsid protein A1 (331 aa).

The protein resides in the virion. Its function is as follows. Minor capsid protein. The chain is Minor capsid protein A1 from Escherichia coli (Bacteriophage SP).